The sequence spans 67 residues: Sec-independent protein translocase protein TatA (67 aa).

The helical transmembrane segment at 1–21 (MGSFSLTHWIIVLIIVVLIFG) threads the bilayer. The interval 43-67 (LNEGTDGKEAQKDDVIEHKKDEDKA) is disordered. Over residues 47 to 67 (TDGKEAQKDDVIEHKKDEDKA) the composition is skewed to basic and acidic residues.

The protein belongs to the TatA/E family. As to quaternary structure, the Tat system comprises two distinct complexes: a TatABC complex, containing multiple copies of TatA, TatB and TatC subunits, and a separate TatA complex, containing only TatA subunits. Substrates initially bind to the TatABC complex, which probably triggers association of the separate TatA complex to form the active translocon.

It is found in the cell inner membrane. In terms of biological role, part of the twin-arginine translocation (Tat) system that transports large folded proteins containing a characteristic twin-arginine motif in their signal peptide across membranes. TatA could form the protein-conducting channel of the Tat system. The sequence is that of Sec-independent protein translocase protein TatA from Neisseria gonorrhoeae (strain ATCC 700825 / FA 1090).